The following is a 166-amino-acid chain: Regulatory protein RecX (166 aa).

Belongs to the RecX family.

The protein resides in the cytoplasm. Modulates RecA activity. The sequence is that of Regulatory protein RecX from Escherichia coli (strain SE11).